We begin with the raw amino-acid sequence, 449 residues long: Heterogeneous nuclear ribonucleoprotein H2 (449 aa).

Position 1 is an N-acetylmethionine (methionine 1). The residue at position 2 (methionine 2) is an N-acetylmethionine; in Heterogeneous nuclear ribonucleoprotein H2, N-terminally processed. The 80-residue stretch at 11–90 (FVVKVRGLPW…RYVEVFKSNS (80 aa)) folds into the RRM 1 domain. Phosphoserine is present on serine 23. Residue lysine 35 forms a Glycyl lysine isopeptide (Lys-Gly) (interchain with G-Cter in SUMO2) linkage. Phosphoserine is present on residues serine 54 and serine 63. Residue lysine 87 forms a Glycyl lysine isopeptide (Lys-Gly) (interchain with G-Cter in SUMO2) linkage. Serine 90 is modified (phosphoserine). Residue lysine 98 forms a Glycyl lysine isopeptide (Lys-Gly) (interchain with G-Cter in SUMO2) linkage. The RRM 2 domain occupies 111 to 188 (GFVRLRGLPF…RYIEIFKSSR (78 aa)). Dimethylated arginine; alternate is present on arginine 233. Residue arginine 233 is modified to Omega-N-methylarginine; alternate. Residues 234 to 249 (GAYGGGYGGYDDYGGY) form a 1-1 repeat. Positions 234–433 (GAYGGGYGGY…YGGQSSMSGY (200 aa)) are 2 X 16 AA Gly-rich approximate repeats. The residue at position 246 (tyrosine 246) is a Phosphotyrosine. The 76-residue stretch at 289-364 (HCVHMRGLPY…RYVELFLNST (76 aa)) folds into the RRM 3 domain. Phosphoserine is present on serine 310. 3 consecutive repeat copies span residues 354-372 (HRYVELFLNSTAGTSGGAY), 374-392 (HSYVELFLNSTAGASGGAY), and 418-433 (AGYGGGYGGQSSMSGY). Residues 354–392 (HRYVELFLNSTAGTSGGAYDHSYVELFLNSTAGASGGAY) are 2 X 19 AA perfect repeats.

In terms of assembly, component of a ribonucleoprotein complex containing mRNAs and RNA-binding proteins including DDX5, HNRNPH2 and SRSF1 as well as splicing regulator ARVCF. Interacts with TXNL4/DIM1.

Its subcellular location is the nucleus. It is found in the nucleoplasm. In terms of biological role, this protein is a component of the heterogeneous nuclear ribonucleoprotein (hnRNP) complexes which provide the substrate for the processing events that pre-mRNAs undergo before becoming functional, translatable mRNAs in the cytoplasm. Binds poly(RG). The protein is Heterogeneous nuclear ribonucleoprotein H2 (Hnrnph2) of Rattus norvegicus (Rat).